The primary structure comprises 33 residues: Cytochrome b6-f complex subunit 5 (33 aa).

Residues 5–25 (LLFGIILGLISCVLAGLFVSA) form a helical membrane-spanning segment.

It belongs to the PetG family. The 4 large subunits of the cytochrome b6-f complex are cytochrome b6, subunit IV (17 kDa polypeptide, PetD), cytochrome f and the Rieske protein, while the 4 small subunits are PetG, PetL, PetM and PetN. The complex functions as a dimer.

Its subcellular location is the plastid. The protein resides in the chloroplast thylakoid membrane. Component of the cytochrome b6-f complex, which mediates electron transfer between photosystem II (PSII) and photosystem I (PSI), cyclic electron flow around PSI, and state transitions. PetG is required for either the stability or assembly of the cytochrome b6-f complex. The polypeptide is Cytochrome b6-f complex subunit 5 (Bigelowiella natans (Pedinomonas minutissima)).